Here is a 240-residue protein sequence, read N- to C-terminus: Large ribosomal subunit protein uL2 (240 aa).

The interval 199–240 (DHPFGGGGRQHPGRPKSVSRDAAPGRKVGDIASKRTGRGGNE) is disordered. Residues 221-231 (APGRKVGDIAS) are compositionally biased toward basic and acidic residues.

It belongs to the universal ribosomal protein uL2 family. Part of the 50S ribosomal subunit. Forms a bridge to the 30S subunit in the 70S ribosome.

Functionally, one of the primary rRNA binding proteins. Required for association of the 30S and 50S subunits to form the 70S ribosome, for tRNA binding and peptide bond formation. It has been suggested to have peptidyltransferase activity; this is somewhat controversial. Makes several contacts with the 16S rRNA in the 70S ribosome. In Halobacterium salinarum (strain ATCC 29341 / DSM 671 / R1), this protein is Large ribosomal subunit protein uL2.